Reading from the N-terminus, the 394-residue chain is Elongation factor Tu (394 aa).

In terms of domain architecture, tr-type G spans 10–204 (KPHINIGTIG…AVDDNIPTPE (195 aa)). The tract at residues 19–26 (GHVDHGKT) is G1. GTP is bound at residue 19-26 (GHVDHGKT). T26 serves as a coordination point for Mg(2+). The G2 stretch occupies residues 60-64 (GITIN). The interval 81–84 (DCPG) is G3. Residues 81–85 (DCPGH) and 136–139 (NKVD) each bind GTP. A G4 region spans residues 136 to 139 (NKVD). Residues 174 to 176 (SAL) form a G5 region.

The protein belongs to the TRAFAC class translation factor GTPase superfamily. Classic translation factor GTPase family. EF-Tu/EF-1A subfamily. As to quaternary structure, monomer.

Its subcellular location is the cytoplasm. The catalysed reaction is GTP + H2O = GDP + phosphate + H(+). In terms of biological role, GTP hydrolase that promotes the GTP-dependent binding of aminoacyl-tRNA to the A-site of ribosomes during protein biosynthesis. This chain is Elongation factor Tu, found in Chlamydia pneumoniae (Chlamydophila pneumoniae).